The sequence spans 379 residues: Pre-mRNA-processing protein 45 (379 aa).

Pro residues predominate over residues 1 to 10 (MFSNRLPPPK). 2 disordered regions span residues 1-22 (MFSNRLPPPKHSQGRVSTALSS) and 353-379 (SEGASGSHGPIQFTKAESDDKSDNYGA). Basic and acidic residues predominate over residues 368-379 (AESDDKSDNYGA).

This sequence belongs to the SNW family. Belongs to the CWC complex (or CEF1-associated complex), a spliceosome sub-complex reminiscent of a late-stage spliceosome composed of the U2, U5 and U6 snRNAs and at least BUD13, BUD31, BRR2, CDC40, CEF1, CLF1, CUS1, CWC2, CWC15, CWC21, CWC22, CWC23, CWC24, CWC25, CWC27, ECM2, HSH155, IST3, ISY1, LEA1, MSL1, NTC20, PRP8, PRP9, PRP11, PRP19, PRP21, PRP22, PRP45, PRP46, SLU7, SMB1, SMD1, SMD2, SMD3, SMX2, SMX3, SNT309, SNU114, SPP2, SYF1, SYF2, RSE1 and YJU2. Interacts with CLF1, PRP22 and PRP46. Interacts with SPP382.

The protein resides in the nucleus. Involved in pre-mRNA splicing. Associated with the spliceosome throughout the splicing reactions, until after the second catalytic step. This Saccharomyces cerevisiae (strain ATCC 204508 / S288c) (Baker's yeast) protein is Pre-mRNA-processing protein 45 (PRP45).